We begin with the raw amino-acid sequence, 661 residues long: Cartilage acidic protein 1 (661 aa).

Residues 1–27 form the signal peptide; it reads MAPSADPGMSRMLPFLLLLWFLPITEG. An FG-GAP 1; atypical repeat occupies 46–88; sequence DYDSNPTQLNYGVAVTDVDHDGDFEIVVAGYNGPNLVLKYDRA. An FG-GAP 2; atypical repeat occupies 105-147; that stretch reads YALRDRQGNAIGVTACDIDGDGREEIYFLNTNNAFSGVATYTD. One copy of the FG-GAP 3; atypical repeat lies at 283-333; sequence AGVDDPHQHGRGVALADFNRDGKVDIVYGNWNGPHRLYLQMSTHGKVRFRD. An FG-GAP 4; atypical repeat occupies 395–437; that stretch reads GDALEPEGRGTGGVVTDFDGDGMLDLILSHGESMAQPLSVFRG. An EGF-like domain is found at 559–605; the sequence is DTNECIQFPFVCPRDKPVCVNTYGSYRCRTNKKCSRGYEPNEDGTAC. 3 disulfide bridges follow: Cys563/Cys577, Cys570/Cys586, and Cys592/Cys605. O-linked (GalNAc...) threonine glycans are attached at residues Thr608, Thr618, Thr619, Thr621, and Thr626.

Post-translationally, O-glycosylated. As to expression, expressed in the interterritorial matrix of articular deep zone cartilage (at protein level). Isoform 1 and isoform 2 are expressed in brain. Isoform 1 is detected in lung and chondrocytes. Detected in cartilage, bone, cultured chondrocytes and lung, and at low levels in heart. Not detected in osteoblasts.

It is found in the secreted. The protein localises to the extracellular space. The protein resides in the extracellular matrix. In Homo sapiens (Human), this protein is Cartilage acidic protein 1 (CRTAC1).